Reading from the N-terminus, the 388-residue chain is GTPase Obg (388 aa).

The region spanning 1 to 159 is the Obg domain; it reads MKFVDEAVIR…RSLKLELLLL (159 aa). The OBG-type G domain maps to 160–333; sequence ADVGLLGMPN…LAAKLWDFIQ (174 aa). GTP contacts are provided by residues 166–173, 191–195, 213–216, 283–286, and 314–316; these read GMPNAGKS, FTTLV, DIPG, NKAD, and SAY. Residues Ser173 and Thr193 each coordinate Mg(2+).

The protein belongs to the TRAFAC class OBG-HflX-like GTPase superfamily. OBG GTPase family. Monomer. Mg(2+) serves as cofactor.

It localises to the cytoplasm. In terms of biological role, an essential GTPase which binds GTP, GDP and possibly (p)ppGpp with moderate affinity, with high nucleotide exchange rates and a fairly low GTP hydrolysis rate. Plays a role in control of the cell cycle, stress response, ribosome biogenesis and in those bacteria that undergo differentiation, in morphogenesis control. This Shewanella oneidensis (strain ATCC 700550 / JCM 31522 / CIP 106686 / LMG 19005 / NCIMB 14063 / MR-1) protein is GTPase Obg.